Here is a 155-residue protein sequence, read N- to C-terminus: uncharacterized protein (155 aa).

This is an uncharacterized protein from Rickettsia prowazekii (strain Madrid E).